Consider the following 384-residue polypeptide: Deoxyguanosinetriphosphate triphosphohydrolase-like protein (384 aa).

In terms of domain architecture, HD spans 63–199 (RLTHSLEVAT…ASLADDISYI (137 aa)).

The protein belongs to the dGTPase family. Type 2 subfamily.

In Rickettsia typhi (strain ATCC VR-144 / Wilmington), this protein is Deoxyguanosinetriphosphate triphosphohydrolase-like protein.